The following is a 1431-amino-acid chain: Collagen alpha-1(XVII) chain (1431 aa).

At 1 to 468 (MDVTKKNKRD…AWCPCGSCCS (468 aa)) the chain is on the cytoplasmic side. Residues 1–569 (MDVTKKNKRD…MTEQENGNLR (569 aa)) form a nonhelical region (NC16) region. 4 disordered regions span residues 25 to 155 (TRLT…PSTR), 167 to 188 (KGSR…PIPK), 304 to 324 (TAYG…TGVS), and 422 to 449 (SVEN…GGGG). Low complexity predominate over residues 60 to 74 (GSSGYINSSGSIRGN). Composition is skewed to polar residues over residues 75-96 (ASTS…SPGS), 111-120 (EGSSSGNSSP), and 170-184 (RSAS…SSTL). Residues 146–231 (RLQSASPSTR…WSSTLPAGSS (86 aa)) are necessary for interaction with DST and for the recruitment of DST to hemidesmosome. Positions 430–449 (RGGGSGGGARGGGGSGGGGG) are enriched in gly residues. A helical; Signal-anchor for type II membrane protein membrane pass occupies residues 469–489 (WWKWLLGLLLTWLLLLGLLFG). The Extracellular portion of the chain corresponds to 490-1431 (LIALAEEVRK…RRRRSIAIKP (942 aa)). Position 547 is a phosphoserine; by CK2 (Ser-547). Disordered stretches follow at residues 564-869 (ENGN…SFIS), 884-996 (DLRG…SSSG), 1158-1178 (DIIG…PGVS), and 1208-1249 (FIIG…SSSV). The interval 570-1417 (GNPGPKGDMG…KGDKGDKGDQ (848 aa)) is triple-helical region. 3 stretches are compositionally biased toward low complexity: residues 657–673 (PRGL…RGPN), 738–751 (EPGA…AGPD), and 778–799 (PGKP…PGRP). Pro residues-rich tracts occupy residues 823–844 (PGPP…PGPA), 889–911 (LGPP…PRGP), 937–946 (PPGPPGPPGP), 979–989 (PPGPPGPPGPP), 1162–1174 (PPGP…PRGP), and 1212–1221 (PPGPPGPQGP). Asn-1230 is a glycosylation site (N-linked (GlcNAc...) asparagine). Polar residues predominate over residues 1232–1249 (SWGSSSSARRGTAYSSSV). Asn-1356 is a glycosylation site (N-linked (GlcNAc...) asparagine). The segment at 1366-1431 (RTHGAIPGPP…RRRRSIAIKP (66 aa)) is disordered. The span at 1407-1416 (QKGDKGDKGD) shows a compositional bias: basic and acidic residues. The interval 1418–1431 (VYTGRRRRSIAIKP) is nonhelical region (NC1). A compositionally biased stretch (basic residues) spans 1421-1431 (GRRRRSIAIKP).

Homotrimers of alpha 1(XVII)chains. Interacts (via cytoplasmic region) with ITGB4 (via cytoplasmic region). Interacts (via cytoplasmic region) with DST (via N-terminus). Interacts (via N-terminus) with PLEC. Interacts (via cytoplasmic region) with DSP. Post-translationally, the intracellular/endo domain is disulfide-linked. In terms of processing, prolines at the third position of the tripeptide repeating unit (G-X-Y) are hydroxylated in some or all of the chains. The ectodomain is shedded from the surface of keratinocytes resulting in a 120-kDa soluble form, also named as 120 kDa linear IgA disease antigen homolog. The shedding is mediated by membrane-bound metalloproteases. This cleavage is inhibited by phosphorylation at Ser-547.

The protein resides in the cell junction. It localises to the hemidesmosome. It is found in the membrane. The protein localises to the secreted. Its subcellular location is the extracellular space. The protein resides in the extracellular matrix. It localises to the basement membrane. Its function is as follows. May play a role in the integrity of hemidesmosome and the attachment of basal keratinocytes to the underlying basement membrane. In terms of biological role, the 120 kDa linear IgA disease antigen homolog is an anchoring filament component involved in dermal-epidermal cohesion. In Mesocricetus auratus (Golden hamster), this protein is Collagen alpha-1(XVII) chain (COL17A1).